A 378-amino-acid polypeptide reads, in one-letter code: TelA-like protein SAS1347 (378 aa).

Belongs to the TelA family.

The protein is TelA-like protein SAS1347 of Staphylococcus aureus (strain MSSA476).